Reading from the N-terminus, the 262-residue chain is MTKKIAMIHPTAIVHENAIIGKDVEIGPYTIIGDRVEIGDNCWIAPHVVIKGPTKMGKGNKIYQFASIGEDCQDLKYNGEETFLEIGDNNVFRESCTVHRGTAQDQGTTRIGNNNLLMAYVHVAHDCVLGNNIILSNNATLAGHTKLANNVIIGGLSALHQFTRVGEFAMIGGCSAVNKDIPPYFMATGNYVEAQGVNSVGLKRSGFNSKAIMEIKRAYKILCREGNSLEQAKIKIAEKLEGCPELQVLYDFICEESRGIVR.

This sequence belongs to the transferase hexapeptide repeat family. LpxA subfamily. Homotrimer.

The protein localises to the cytoplasm. It catalyses the reaction a (3R)-hydroxyacyl-[ACP] + UDP-N-acetyl-alpha-D-glucosamine = a UDP-3-O-[(3R)-3-hydroxyacyl]-N-acetyl-alpha-D-glucosamine + holo-[ACP]. It participates in glycolipid biosynthesis; lipid IV(A) biosynthesis; lipid IV(A) from (3R)-3-hydroxytetradecanoyl-[acyl-carrier-protein] and UDP-N-acetyl-alpha-D-glucosamine: step 1/6. Its function is as follows. Involved in the biosynthesis of lipid A, a phosphorylated glycolipid that anchors the lipopolysaccharide to the outer membrane of the cell. The polypeptide is Acyl-[acyl-carrier-protein]--UDP-N-acetylglucosamine O-acyltransferase (Psychromonas ingrahamii (strain DSM 17664 / CCUG 51855 / 37)).